We begin with the raw amino-acid sequence, 244 residues long: 7-cyano-7-deazaguanine synthase (244 aa).

14-24 (FSGGQDSATCV) is an ATP binding site. Residues cysteine 202, cysteine 217, cysteine 220, and cysteine 223 each coordinate Zn(2+).

The protein belongs to the QueC family. Zn(2+) serves as cofactor.

The catalysed reaction is 7-carboxy-7-deazaguanine + NH4(+) + ATP = 7-cyano-7-deazaguanine + ADP + phosphate + H2O + H(+). It functions in the pathway purine metabolism; 7-cyano-7-deazaguanine biosynthesis. Functionally, catalyzes the ATP-dependent conversion of 7-carboxy-7-deazaguanine (CDG) to 7-cyano-7-deazaguanine (preQ(0)). This is 7-cyano-7-deazaguanine synthase from Burkholderia ambifaria (strain MC40-6).